Reading from the N-terminus, the 108-residue chain is Glutaredoxin-1 (108 aa).

In terms of domain architecture, Glutaredoxin spans 3–106 (EEFVQQRLAN…DILSSIGVLR (104 aa)). Cysteine 23 and cysteine 26 are oxidised to a cystine.

The protein belongs to the glutaredoxin family.

The protein resides in the virion. Its function is as follows. Displays thioltransferase and dehydroascorbate reductase activities. The polypeptide is Glutaredoxin-1 (OPG075) (Vaccinia virus (strain Copenhagen) (VACV)).